Consider the following 71-residue polypeptide: Bacteriocin carnobacteriocin-A (71 aa).

The propeptide occupies 1-18 (MNNVKELSIKEMQQVTGG). A disulfide bond links Cys-40 and Cys-69.

The protein resides in the secreted. Its function is as follows. Has antibacterial activity. This chain is Bacteriocin carnobacteriocin-A (cbnBA), found in Carnobacterium maltaromaticum (Carnobacterium piscicola).